We begin with the raw amino-acid sequence, 433 residues long: Serine/threonine-protein kinase KDX1 (433 aa).

Residues 23 to 318 (FHLTGKIGRG…VEDALEHPYL (296 aa)) form the Protein kinase domain. ATP is bound by residues 29 to 37 (IGRGSHSLI) and Lys-55. The Proton acceptor role is filled by Asp-153.

Belongs to the protein kinase superfamily. Ser/Thr protein kinase family. In terms of assembly, interacts with RLM1.

The catalysed reaction is L-seryl-[protein] + ATP = O-phospho-L-seryl-[protein] + ADP + H(+). The enzyme catalyses L-threonyl-[protein] + ATP = O-phospho-L-threonyl-[protein] + ADP + H(+). Serine/threonine-protein kinase involved in the SLT2 mitogen-activated (MAP) kinase signaling pathway that regulates cell wall integrity. May also be involved in the mating pheromone and the CWI MAPK pathways. This Saccharomyces cerevisiae (strain ATCC 204508 / S288c) (Baker's yeast) protein is Serine/threonine-protein kinase KDX1 (KDX1).